The sequence spans 147 residues: Large ribosomal subunit protein bL9 (147 aa).

This sequence belongs to the bacterial ribosomal protein bL9 family.

Its function is as follows. Binds to the 23S rRNA. This Geobacter sp. (strain M21) protein is Large ribosomal subunit protein bL9.